We begin with the raw amino-acid sequence, 1019 residues long: Phosphatidylinositol 3,4,5-trisphosphate 5-phosphatase 1 (1019 aa).

The SH2 domain occupies 5-101; sequence WYHGNITRSK…GLVTHLQYPI (97 aa). Residues 103 to 116 are compositionally biased toward acidic residues; it reads KEEEGPEEPDEEQE. 2 disordered regions span residues 103–133 and 909–1019; these read KEEE…TPPS and ETQN…PPTA. The SH3-binding 1 signature appears at 120–125; it reads PNVPPR. Polar residues-rich tracts occupy residues 909 to 931 and 958 to 980; these read ETQN…KQSP and PITS…TNRT. An SH3-binding 2 motif is present at residues 966–971; it reads TLSTQK. Residues 1004–1007 carry the NPXY motif motif; sequence NPLY. A Phosphotyrosine modification is found at Y1007. Polar residues predominate over residues 1010–1019; sequence VNNTLYPPTA.

Belongs to the inositol 1,4,5-trisphosphate 5-phosphatase family. Tyrosine phosphorylated by the members of the SRC family after exposure to a diverse array of extracellular stimuli.

Its subcellular location is the cytoplasm. The protein localises to the cell membrane. It is found in the membrane raft. The protein resides in the cytoskeleton. It catalyses the reaction a 1,2-diacyl-sn-glycero-3-phospho-(1D-myo-inositol-3,4,5-trisphosphate) + H2O = a 1,2-diacyl-sn-glycero-3-phospho-(1D-myo-inositol-3,4-bisphosphate) + phosphate. The catalysed reaction is 1D-myo-inositol 1,3,4,5-tetrakisphosphate + H2O = 1D-myo-inositol 1,3,4-trisphosphate + phosphate. It carries out the reaction a 1,2-diacyl-sn-glycero-3-phospho-(1D-myo-inositol-4,5-bisphosphate) + H2O = a 1,2-diacyl-sn-glycero-3-phospho-(1D-myo-inositol 4-phosphate) + phosphate. Its function is as follows. Phosphatidylinositol (PtdIns) phosphatase that specifically hydrolyzes the 5-phosphate of phosphatidylinositol-3,4,5-trisphosphate (PtdIns(3,4,5)P3) to produce PtdIns(3,4)P2, thereby negatively regulating the PI3K (phosphoinositide 3-kinase) pathways. Able also to hydrolyzes the 5-phosphate of phosphatidylinositol-4,5-bisphosphate (PtdIns(4,5)P3) and inositol 1,3,4,5-tetrakisphosphate. Acts as a negative regulator of B-cell antigen receptor signaling. Mediates signaling from the FC-gamma-RIIB receptor (FCGR2B), playing a central role in terminating signal transduction from activating immune/hematopoietic cell receptor systems. Acts as a negative regulator of myeloid cell proliferation/survival and chemotaxis, mast cell degranulation, immune cells homeostasis, integrin alpha-IIb/beta-3 signaling in platelets and JNK signaling in B-cells. The chain is Phosphatidylinositol 3,4,5-trisphosphate 5-phosphatase 1 (inpp5d) from Xenopus laevis (African clawed frog).